Consider the following 471-residue polypeptide: Adenosylhomocysteinase (471 aa).

Positions 58, 133, and 195 each coordinate substrate. Residue 196 to 198 (TTT) coordinates NAD(+). 2 residues coordinate substrate: Lys-225 and Asp-229. Residues Asn-230, 259–264 (GFGDVG), Glu-282, Asn-317, 338–340 (IGH), and Asn-383 each bind NAD(+).

Belongs to the adenosylhomocysteinase family. NAD(+) serves as cofactor.

The protein localises to the cytoplasm. It carries out the reaction S-adenosyl-L-homocysteine + H2O = L-homocysteine + adenosine. The protein operates within amino-acid biosynthesis; L-homocysteine biosynthesis; L-homocysteine from S-adenosyl-L-homocysteine: step 1/1. In terms of biological role, may play a key role in the regulation of the intracellular concentration of adenosylhomocysteine. The chain is Adenosylhomocysteinase from Rhodopseudomonas palustris (strain BisB5).